Here is an 879-residue protein sequence, read N- to C-terminus: Phosphoenolpyruvate carboxylase (879 aa).

Active-site residues include His-141 and Lys-546.

Belongs to the PEPCase type 1 family. Mg(2+) is required as a cofactor.

It carries out the reaction oxaloacetate + phosphate = phosphoenolpyruvate + hydrogencarbonate. Functionally, forms oxaloacetate, a four-carbon dicarboxylic acid source for the tricarboxylic acid cycle. The chain is Phosphoenolpyruvate carboxylase from Stutzerimonas stutzeri (strain A1501) (Pseudomonas stutzeri).